We begin with the raw amino-acid sequence, 101 residues long: Small ribosomal subunit protein uS14 (101 aa).

It belongs to the universal ribosomal protein uS14 family. As to quaternary structure, part of the 30S ribosomal subunit. Contacts proteins S3 and S10.

Binds 16S rRNA, required for the assembly of 30S particles and may also be responsible for determining the conformation of the 16S rRNA at the A site. This Polynucleobacter asymbioticus (strain DSM 18221 / CIP 109841 / QLW-P1DMWA-1) (Polynucleobacter necessarius subsp. asymbioticus) protein is Small ribosomal subunit protein uS14.